The primary structure comprises 332 residues: Methylthioribose-1-phosphate isomerase (332 aa).

Substrate is bound by residues 44-46 (RGA), Arg87, and Gln192. The active-site Proton donor is Asp233. Substrate is bound at residue 243–244 (NK).

The protein belongs to the eIF-2B alpha/beta/delta subunits family. MtnA subfamily.

The enzyme catalyses 5-(methylsulfanyl)-alpha-D-ribose 1-phosphate = 5-(methylsulfanyl)-D-ribulose 1-phosphate. It functions in the pathway amino-acid biosynthesis; L-methionine biosynthesis via salvage pathway; L-methionine from S-methyl-5-thio-alpha-D-ribose 1-phosphate: step 1/6. Catalyzes the interconversion of methylthioribose-1-phosphate (MTR-1-P) into methylthioribulose-1-phosphate (MTRu-1-P). In Dehalococcoides mccartyi (strain CBDB1), this protein is Methylthioribose-1-phosphate isomerase.